Reading from the N-terminus, the 116-residue chain is uncharacterized protein (116 aa).

The 72-residue stretch at 2-73 (DGSVGTGRQV…PKALICGHRD (72 aa)) folds into the N-acetylmuramoyl-L-alanine amidase domain.

The protein to phage T3 and T7 N-acetylmuramoyl-L-alanine amidases.

This is an uncharacterized protein from Haemophilus influenzae (strain ATCC 51907 / DSM 11121 / KW20 / Rd).